A 246-amino-acid chain; its full sequence is Trypsin-5 (246 aa).

The N-terminal stretch at 1 to 15 (MNSLLFLALVGAAVA) is a signal peptide. Residues 16–23 (FPVDDDDK) constitute a propeptide, activation peptide. One can recognise a Peptidase S1 domain in the interval 24 to 244 (IVGGYTCREN…YVDWIQDTIA (221 aa)). Cysteines 48 and 64 form a disulfide. Residues His63 and Asp107 each act as charge relay system in the active site. 3 disulfide bridges follow: Cys139/Cys206, Cys171/Cys185, and Cys196/Cys220. Catalysis depends on Ser200, which acts as the Charge relay system.

It belongs to the peptidase S1 family. In terms of processing, proteolytically cleaved and activated by an autocatalytic mechanism. Cleavage by CTRC inhibits autoactivation. Expressed in the heart, lung, brain, kidney, liver, epididymis, ovary and uterus. Expression in the testis is limited to round and elongating spermatids.

It is found in the cytoplasmic vesicle. It localises to the secretory vesicle. The protein localises to the acrosome. The catalysed reaction is Preferential cleavage: Arg-|-Xaa, Lys-|-Xaa.. Activated by autocatalytic cleavage. Cleavage by CTRC inhibits autoactivation. Functionally, serine protease capable of autoactivation. This Mus musculus (Mouse) protein is Trypsin-5.